A 201-amino-acid chain; its full sequence is Recombination protein RecR (201 aa).

Residues Cys59–Cys74 form a C4-type zinc finger. The Toprim domain occupies Ser82 to Pro177.

The protein belongs to the RecR family.

Functionally, may play a role in DNA repair. It seems to be involved in an RecBC-independent recombinational process of DNA repair. It may act with RecF and RecO. This chain is Recombination protein RecR, found in Rickettsia felis (strain ATCC VR-1525 / URRWXCal2) (Rickettsia azadi).